A 259-amino-acid chain; its full sequence is Ribosomal RNA small subunit methyltransferase A (259 aa).

Positions 13, 15, 40, 61, 85, and 103 each coordinate S-adenosyl-L-methionine.

It belongs to the class I-like SAM-binding methyltransferase superfamily. rRNA adenine N(6)-methyltransferase family. RsmA subfamily.

The protein localises to the cytoplasm. The enzyme catalyses adenosine(1518)/adenosine(1519) in 16S rRNA + 4 S-adenosyl-L-methionine = N(6)-dimethyladenosine(1518)/N(6)-dimethyladenosine(1519) in 16S rRNA + 4 S-adenosyl-L-homocysteine + 4 H(+). Specifically dimethylates two adjacent adenosines (A1518 and A1519) in the loop of a conserved hairpin near the 3'-end of 16S rRNA in the 30S particle. May play a critical role in biogenesis of 30S subunits. This is Ribosomal RNA small subunit methyltransferase A from Neisseria meningitidis serogroup A / serotype 4A (strain DSM 15465 / Z2491).